The chain runs to 391 residues: MLPSHLNGHSPLARRCPRLSAASPPATGDSDAAAAAADAPLAEHDRIYFQSYSHIGIHEAMIKDRVRTDAYRSAIMHHQKFIEGKVVMDVGCGTGILSVFCARAGAKCVYAVEASEMATQAREIVKANNLDDKVVVVHGRVEDVEVEDKVDVIISEWMGYMLLYESMLPSVLFARDKWLKPGGLILPSHATLFMAPITNSERYEGSVDFWSDVYGINMSALVPLAKKFTSEEPSIEIIGGENVLSWPFVVKHIDCYTFKAEELKSFTTKYKVSSMMLAPIHGFGLWFEVEFNGPSNPTDKSPSDLNPLDVIRKKRRRGSEDPVVLSTAPEDEPTHWHQTILYFPDPIEVKQDQIIEGSVKVSQSEENPRFLNIQLDCTTGGQTLVKDYAMR.

A disordered region spans residues 1-35 (MLPSHLNGHSPLARRCPRLSAASPPATGDSDAAAA). Residues 20–35 (SAASPPATGDSDAAAA) are compositionally biased toward low complexity. The 347-residue stretch at 45 to 391 (DRIYFQSYSH…QTLVKDYAMR (347 aa)) folds into the SAM-dependent MTase PRMT-type domain. Positions 58, 67, 91, 113, and 142 each coordinate S-adenosyl-L-methionine. Residues E156 and E165 contribute to the active site.

Belongs to the class I-like SAM-binding methyltransferase superfamily. Protein arginine N-methyltransferase family. PRMT6 subfamily.

Its function is as follows. Arginine methyltransferase that can both catalyze the formation of omega-N monomethylarginine (MMA) and asymmetrical dimethylarginine (aDMA). The chain is Probable protein arginine N-methyltransferase 6.1 (PRMT6.1) from Oryza sativa subsp. japonica (Rice).